A 156-amino-acid chain; its full sequence is 6,7-dimethyl-8-ribityllumazine synthase (156 aa).

5-amino-6-(D-ribitylamino)uracil is bound by residues Phe-24, 58 to 60 (AFE), and 82 to 84 (VII). 87–88 (ST) contacts (2S)-2-hydroxy-3-oxobutyl phosphate. The Proton donor role is filled by His-90. Phe-115 provides a ligand contact to 5-amino-6-(D-ribitylamino)uracil. Residue Arg-129 participates in (2S)-2-hydroxy-3-oxobutyl phosphate binding.

This sequence belongs to the DMRL synthase family.

The catalysed reaction is (2S)-2-hydroxy-3-oxobutyl phosphate + 5-amino-6-(D-ribitylamino)uracil = 6,7-dimethyl-8-(1-D-ribityl)lumazine + phosphate + 2 H2O + H(+). Its pathway is cofactor biosynthesis; riboflavin biosynthesis; riboflavin from 2-hydroxy-3-oxobutyl phosphate and 5-amino-6-(D-ribitylamino)uracil: step 1/2. In terms of biological role, catalyzes the formation of 6,7-dimethyl-8-ribityllumazine by condensation of 5-amino-6-(D-ribitylamino)uracil with 3,4-dihydroxy-2-butanone 4-phosphate. This is the penultimate step in the biosynthesis of riboflavin. This chain is 6,7-dimethyl-8-ribityllumazine synthase, found in Chlorobaculum parvum (strain DSM 263 / NCIMB 8327) (Chlorobium vibrioforme subsp. thiosulfatophilum).